The chain runs to 124 residues: Ribonuclease pancreatic (124 aa).

A compositionally biased stretch (basic and acidic residues) spans 1 to 13 (KESAAAKFERQHM). Positions 1 to 24 (KESAAAKFERQHMDSSTSSASSSN) are disordered. The substrate site is built by Lys7 and Arg10. His12 functions as the Proton acceptor in the catalytic mechanism. 4 disulfides stabilise this stretch: Cys26–Cys84, Cys40–Cys95, Cys58–Cys110, and Cys65–Cys72. Substrate contacts are provided by residues 41-45 (KPVNT), Lys66, and Arg85. His119 (proton donor) is an active-site residue.

Belongs to the pancreatic ribonuclease family. In terms of assembly, monomer. Interacts with and forms tight 1:1 complexes with RNH1. Dimerization of two such complexes may occur. Interaction with RNH1 inhibits this protein. In terms of tissue distribution, pancreas.

The protein resides in the secreted. The enzyme catalyses an [RNA] containing cytidine + H2O = an [RNA]-3'-cytidine-3'-phosphate + a 5'-hydroxy-ribonucleotide-3'-[RNA].. It catalyses the reaction an [RNA] containing uridine + H2O = an [RNA]-3'-uridine-3'-phosphate + a 5'-hydroxy-ribonucleotide-3'-[RNA].. Its function is as follows. Endonuclease that catalyzes the cleavage of RNA on the 3' side of pyrimidine nucleotides. Acts on single-stranded and double-stranded RNA. This is Ribonuclease pancreatic (RNASE1) from Connochaetes taurinus (Blue wildebeest).